We begin with the raw amino-acid sequence, 145 residues long: Small ribosomal subunit protein uS17c (145 aa).

The N-terminal 36 residues, 1–36 (MLLTTPFVSSPVRVQGNGGSGASPWAGAATALRIQA), are a transit peptide targeting the chloroplast. The disordered stretch occupies residues 101–145 (KTKHFLAVPLPPRDTRRKSQLLPPLQSQSQSQDQDQPPTPPPSSD). Positions 120-136 (QLLPPLQSQSQSQDQDQ) are enriched in low complexity.

This sequence belongs to the universal ribosomal protein uS17 family. Part of the 30S ribosomal subunit.

The protein resides in the plastid. It localises to the chloroplast. Functionally, one of the primary rRNA binding proteins, it binds specifically to the 5'-end of 16S ribosomal RNA. The sequence is that of Small ribosomal subunit protein uS17c (RPS17) from Oryza sativa subsp. japonica (Rice).